The primary structure comprises 672 residues: tRNA 5-methylaminomethyl-2-thiouridine biosynthesis bifunctional protein MnmC (672 aa).

The segment at 1–241 (MLKVTTAHIH…KRECLQGFKP (241 aa)) is tRNA (mnm(5)s(2)U34)-methyltransferase. Residues 271 to 672 (IGGGISSLFS…RKLLKGTPVK (402 aa)) form an FAD-dependent cmnm(5)s(2)U34 oxidoreductase region.

The protein in the N-terminal section; belongs to the methyltransferase superfamily. tRNA (mnm(5)s(2)U34)-methyltransferase family. It in the C-terminal section; belongs to the DAO family. FAD is required as a cofactor.

Its subcellular location is the cytoplasm. The catalysed reaction is 5-aminomethyl-2-thiouridine(34) in tRNA + S-adenosyl-L-methionine = 5-methylaminomethyl-2-thiouridine(34) in tRNA + S-adenosyl-L-homocysteine + H(+). Catalyzes the last two steps in the biosynthesis of 5-methylaminomethyl-2-thiouridine (mnm(5)s(2)U) at the wobble position (U34) in tRNA. Catalyzes the FAD-dependent demodification of cmnm(5)s(2)U34 to nm(5)s(2)U34, followed by the transfer of a methyl group from S-adenosyl-L-methionine to nm(5)s(2)U34, to form mnm(5)s(2)U34. The chain is tRNA 5-methylaminomethyl-2-thiouridine biosynthesis bifunctional protein MnmC from Mannheimia succiniciproducens (strain KCTC 0769BP / MBEL55E).